Consider the following 301-residue polypeptide: GTPase Era (301 aa).

One can recognise an Era-type G domain in the interval 6–173; it reads KSGFVAIVGR…LEQTNANLEI (168 aa). The tract at residues 14–21 is G1; that stretch reads GRPNVGKS. 14–21 serves as a coordination point for GTP; the sequence is GRPNVGKS. Residues 40–44 form a G2 region; that stretch reads QTTRN. Residues 61–64 are G3; that stretch reads DTPG. GTP-binding positions include 61–65 and 123–126; these read DTPGI and NKID. Positions 123–126 are G4; that stretch reads NKID. The tract at residues 152–154 is G5; it reads ISA. The KH type-2 domain occupies 204–282; that stretch reads TREEVPHSVA…FLEIWVKVQK (79 aa).

It belongs to the TRAFAC class TrmE-Era-EngA-EngB-Septin-like GTPase superfamily. Era GTPase family. As to quaternary structure, monomer.

Its subcellular location is the cytoplasm. The protein localises to the cell membrane. An essential GTPase that binds both GDP and GTP, with rapid nucleotide exchange. Plays a role in 16S rRNA processing and 30S ribosomal subunit biogenesis and possibly also in cell cycle regulation and energy metabolism. The chain is GTPase Era from Listeria innocua serovar 6a (strain ATCC BAA-680 / CLIP 11262).